The primary structure comprises 33 residues: Cytochrome b6-f complex subunit 7 (33 aa).

The helical transmembrane segment at 5-25 (IFNTAVITFTLVLVGLGAGYL) threads the bilayer.

It belongs to the PetM family. As to quaternary structure, the 4 large subunits of the cytochrome b6-f complex are cytochrome b6, subunit IV (17 kDa polypeptide, PetD), cytochrome f and the Rieske protein, while the 4 small subunits are PetG, PetL, PetM and PetN. The complex functions as a dimer.

The protein localises to the cellular thylakoid membrane. In terms of biological role, component of the cytochrome b6-f complex, which mediates electron transfer between photosystem II (PSII) and photosystem I (PSI), cyclic electron flow around PSI, and state transitions. The protein is Cytochrome b6-f complex subunit 7 of Thermosynechococcus vestitus (strain NIES-2133 / IAM M-273 / BP-1).